Here is a 324-residue protein sequence, read N- to C-terminus: tRNA pseudouridine synthase B (324 aa).

D49 (nucleophile) is an active-site residue. A disordered region spans residues 87 to 107; sequence RSTDDLEGQPTKTSDKRPSRE.

This sequence belongs to the pseudouridine synthase TruB family. Type 1 subfamily.

It carries out the reaction uridine(55) in tRNA = pseudouridine(55) in tRNA. Functionally, responsible for synthesis of pseudouridine from uracil-55 in the psi GC loop of transfer RNAs. This chain is tRNA pseudouridine synthase B, found in Brucella canis (strain ATCC 23365 / NCTC 10854 / RM-666).